Consider the following 334-residue polypeptide: tRNA N6-adenosine threonylcarbamoyltransferase (334 aa).

The Fe cation site is built by H107 and H111. Substrate contacts are provided by residues 129 to 133 (LVSGG), D162, G175, and N269. Position 297 (D297) interacts with Fe cation.

The protein belongs to the KAE1 / TsaD family. Fe(2+) serves as cofactor.

The protein resides in the cytoplasm. It catalyses the reaction L-threonylcarbamoyladenylate + adenosine(37) in tRNA = N(6)-L-threonylcarbamoyladenosine(37) in tRNA + AMP + H(+). Functionally, required for the formation of a threonylcarbamoyl group on adenosine at position 37 (t(6)A37) in tRNAs that read codons beginning with adenine. Is involved in the transfer of the threonylcarbamoyl moiety of threonylcarbamoyl-AMP (TC-AMP) to the N6 group of A37, together with TsaE and TsaB. TsaD likely plays a direct catalytic role in this reaction. This is tRNA N6-adenosine threonylcarbamoyltransferase from Campylobacter concisus (strain 13826).